The sequence spans 338 residues: MAEFEIPDFYVPFPLECNPHLEEASRAMWEWIDANGLAPTERARDRMRRTGADLSGAYVWPRADLDTLTIGLKWIALTFRIDDQIDEDDTAERLPARMTAIDELRGTLHGLPVSGRSPTARALGALWQETALGRPATWCDAFIGHFEAFLQTYTTEAGLNAHGAGLRLDDYLDRRMYSVGMPWLWDLDELRLPIFLPGSVRTCGPMNKLRRAGALHIALVNDVFSVERETLVGYQHNAVTIIREAQGCSLQEAVDQVAVLVEAQLHTVLQARQELLEELDRQALPSRAREAAVDYAANVAANLSGQLVWHSSVERYAVDDLQSAADPRATPTTSSLGI.

Mg(2+)-binding residues include aspartate 82 and glutamate 87. The short motif at 82–87 (DDQIDE) is the DDXXXE motif element. Arginine 175 contributes to the substrate binding site. Mg(2+) is bound by residues asparagine 221 and serine 225. Residues 221-229 (NDVFSVERE) carry the NXXXSXXXE motif motif. Arginine 228 provides a ligand contact to substrate. Glutamate 229 contacts Mg(2+).

Belongs to the terpene synthase family. Homodimer. It depends on Mg(2+) as a cofactor.

The catalysed reaction is (2E,6E)-farnesyl diphosphate + H2O = (2Z,6E)-hedycaryol + diphosphate. The protein operates within secondary metabolite biosynthesis; terpenoid biosynthesis. Its function is as follows. Catalyzes the conversion of (2E,6E)-farnesyl diphosphate (FPP) into (2Z,6E)-hedycaryol via a 1,11-cyclization. This is (2Z,6E)-hedycaryol synthase from Kitasatospora setae (strain ATCC 33774 / DSM 43861 / JCM 3304 / KCC A-0304 / NBRC 14216 / KM-6054) (Streptomyces setae).